We begin with the raw amino-acid sequence, 192 residues long: Imidazoleglycerol-phosphate dehydratase (192 aa).

Belongs to the imidazoleglycerol-phosphate dehydratase family.

Its subcellular location is the cytoplasm. It carries out the reaction D-erythro-1-(imidazol-4-yl)glycerol 3-phosphate = 3-(imidazol-4-yl)-2-oxopropyl phosphate + H2O. It functions in the pathway amino-acid biosynthesis; L-histidine biosynthesis; L-histidine from 5-phospho-alpha-D-ribose 1-diphosphate: step 6/9. The sequence is that of Imidazoleglycerol-phosphate dehydratase from Staphylococcus saprophyticus subsp. saprophyticus (strain ATCC 15305 / DSM 20229 / NCIMB 8711 / NCTC 7292 / S-41).